Reading from the N-terminus, the 346-residue chain is N-acetyl-gamma-glutamyl-phosphate reductase (346 aa).

Cys-150 is an active-site residue.

It belongs to the NAGSA dehydrogenase family. Type 1 subfamily.

Its subcellular location is the cytoplasm. The enzyme catalyses N-acetyl-L-glutamate 5-semialdehyde + phosphate + NADP(+) = N-acetyl-L-glutamyl 5-phosphate + NADPH + H(+). The protein operates within amino-acid biosynthesis; L-arginine biosynthesis; N(2)-acetyl-L-ornithine from L-glutamate: step 3/4. In terms of biological role, catalyzes the NADPH-dependent reduction of N-acetyl-5-glutamyl phosphate to yield N-acetyl-L-glutamate 5-semialdehyde. This chain is N-acetyl-gamma-glutamyl-phosphate reductase, found in Brevibacillus brevis (strain 47 / JCM 6285 / NBRC 100599).